We begin with the raw amino-acid sequence, 592 residues long: Salivary peroxidase/catechol oxidase (592 aa).

The first 21 residues, 1–21 (MWMFLKLLLFVCSSWWSCAQA), serve as a signal peptide directing secretion. Cysteine 24 and cysteine 37 are disulfide-bonded. An N-linked (GlcNAc...) asparagine glycan is attached at asparagine 25. Catalysis depends on histidine 110, which acts as the Proton acceptor. Ca(2+) is bound by residues aspartate 111, threonine 187, phenylalanine 189, aspartate 191, and serine 193. Asparagine 230 carries N-linked (GlcNAc...) asparagine glycosylation. The cysteines at positions 235 and 244 are disulfide-linked. Histidine 353 is a binding site for heme b. The N-linked (GlcNAc...) asparagine glycan is linked to asparagine 366. Disulfide bonds link cysteine 452–cysteine 509 and cysteine 553–cysteine 580.

The protein belongs to the peroxidase family. XPO subfamily. As to expression, female salivary gland.

Its subcellular location is the secreted. The catalysed reaction is 2 catechol + O2 = 2 1,2-benzoquinone + 2 H2O. Its function is as follows. Inhibits noradrenaline-induced smooth muscle contraction in the host, probably due to the oxidation of noradrenaline, resulting in vasodilation. Exhibits peroxidase activity. The sequence is that of Salivary peroxidase/catechol oxidase from Anopheles albimanus (New world malaria mosquito).